The chain runs to 180 residues: Endothelin-2 (180 aa).

The signal sequence occupies residues 1-26 (MVALPTAWCSVALALLVALHEGKSQS). The propeptide occupies 27–47 (AATSEEPPAPSARARGSHLRL). 2 disulfide bridges follow: Cys-50-Cys-64 and Cys-52-Cys-60. The propeptide occupies 71-180 (VNTPGQTAPY…ESSHSRWRKR (110 aa)). The interval 97-112 (CECYSTRDSACVTFCH) is endothelin-like. Residues 157–180 (NFTRHQQQKATREPESSHSRWRKR) are disordered.

Belongs to the endothelin/sarafotoxin family.

The protein resides in the secreted. Its function is as follows. Endothelins are endothelium-derived vasoconstrictor peptides. This chain is Endothelin-2 (EDN2), found in Atelerix albiventris (Middle-African hedgehog).